The following is a 194-amino-acid chain: Endoribonuclease YbeY (194 aa).

Residues His127, His131, and Asp137 each contribute to the Zn(2+) site. A disordered region spans residues 162–194 (PLSNDEDSAPEQDDSFDDDASDSSGGIMSGGVS). Acidic residues predominate over residues 165-182 (NDEDSAPEQDDSFDDDAS).

Belongs to the endoribonuclease YbeY family. It depends on Zn(2+) as a cofactor.

It is found in the cytoplasm. Functionally, single strand-specific metallo-endoribonuclease involved in late-stage 70S ribosome quality control and in maturation of the 3' terminus of the 16S rRNA. The chain is Endoribonuclease YbeY from Rhodopirellula baltica (strain DSM 10527 / NCIMB 13988 / SH1).